We begin with the raw amino-acid sequence, 313 residues long: Protein FixB (313 aa).

FAD is bound at residue 255–283; sequence LYLAVGISGQIQHMVGANASQTIFAINKD.

It belongs to the ETF alpha-subunit/FixB family. As to quaternary structure, heterodimer of FixA and FixB.

Its pathway is amine and polyamine metabolism; carnitine metabolism. Functionally, required for anaerobic carnitine reduction. May bring reductant to CaiA. This is Protein FixB from Shigella dysenteriae serotype 1 (strain Sd197).